A 187-amino-acid chain; its full sequence is Putative gamma-glutamylcyclotransferase At3g02910 (187 aa).

Residue Tyr-17 to Leu-20 participates in substrate binding. Glu-92 serves as the catalytic Proton acceptor.

This sequence belongs to the gamma-glutamylcyclotransferase family.

Its function is as follows. Putative gamma-glutamylcyclotransferase. The polypeptide is Putative gamma-glutamylcyclotransferase At3g02910 (Arabidopsis thaliana (Mouse-ear cress)).